Consider the following 495-residue polypeptide: Serine/threonine protein phosphatase 2A 57 kDa regulatory subunit B' alpha isoform (495 aa).

A compositionally biased stretch (basic residues) spans 1 to 13 (MFKKIMKGANRKA). 2 disordered regions span residues 1–61 (MFKK…AATT) and 462–495 (QAKSKQVEEQRQNRWRRLDEAVEEREREDPMITS). The segment covering 49–61 (VPSSPNSMAAATT) has biased composition (polar residues).

The protein belongs to the phosphatase 2A regulatory subunit B56 family. As to quaternary structure, PP2A consists of a common heteromeric enzyme, composed of a catalytic subunit (subunits C), a constant regulatory subunit (subunit A), and a variety of regulatory subunits such as subunits B (the R2/B/PR55/B55, R3/B''/PR72/PR130/PR59 and R5/B'/B56 families). Interacts with BZR1. Interacts with BRI1. Interacts with SRK2E/OST1. In terms of tissue distribution, expressed ubiquitously, higher levels in leaves.

It localises to the nucleus. The protein resides in the cytoplasm. Functionally, the B regulatory subunit may modulate substrate selectivity and catalytic activity, and may also direct the localization of the catalytic enzyme to a particular subcellular compartment. Required for the formation of the PP2A holoenzyme that positively regulates brassinosteroid signaling by dephosphorylating and activating BZR1. The protein is Serine/threonine protein phosphatase 2A 57 kDa regulatory subunit B' alpha isoform (B'ALPHA) of Arabidopsis thaliana (Mouse-ear cress).